Reading from the N-terminus, the 180-residue chain is Large ribosomal subunit protein uL6 (180 aa).

It belongs to the universal ribosomal protein uL6 family. As to quaternary structure, part of the 50S ribosomal subunit.

This protein binds to the 23S rRNA, and is important in its secondary structure. It is located near the subunit interface in the base of the L7/L12 stalk, and near the tRNA binding site of the peptidyltransferase center. The polypeptide is Large ribosomal subunit protein uL6 (Lachnoclostridium phytofermentans (strain ATCC 700394 / DSM 18823 / ISDg) (Clostridium phytofermentans)).